A 362-amino-acid chain; its full sequence is Glutaminase-asparaginase (362 aa).

Positions 1–25 (MNAALKTFAPSALALLLILPSSASA) are cleaved as a signal peptide. Positions 35 to 362 (ANVVILATGG…KELQRIFWEY (328 aa)) constitute an Asparaginase/glutaminase domain. The active-site Acyl-ester intermediate is the threonine 45. Substrate-binding positions include serine 92 and 125 to 126 (TD).

The protein belongs to the asparaginase 1 family. As to quaternary structure, homotetramer.

Its subcellular location is the periplasm. The enzyme catalyses L-glutamine + H2O = L-glutamate + NH4(+). The catalysed reaction is L-asparagine + H2O = L-aspartate + NH4(+). This Pseudomonas putida (strain ATCC 47054 / DSM 6125 / CFBP 8728 / NCIMB 11950 / KT2440) protein is Glutaminase-asparaginase (ansB).